The chain runs to 857 residues: Leucine--tRNA ligase (857 aa).

Residues 42–52 carry the 'HIGH' region motif; sequence PYPSGRLHMGH. The short motif at 617–621 is the 'KMSKS' region element; that stretch reads KMSKS. K620 provides a ligand contact to ATP.

Belongs to the class-I aminoacyl-tRNA synthetase family.

It is found in the cytoplasm. The enzyme catalyses tRNA(Leu) + L-leucine + ATP = L-leucyl-tRNA(Leu) + AMP + diphosphate. The protein is Leucine--tRNA ligase of Vibrio parahaemolyticus serotype O3:K6 (strain RIMD 2210633).